Reading from the N-terminus, the 384-residue chain is MVANMRKKLESYLINLIKSGPRSICDKIVLFILSILEKIYNLLILLRRLLYNLNLVKPGEVEARVISVGNITAGGTGKTPLVIYLAKKLAEENRVVVISRGYQSQSEGEEPSVVSDGRNILTDVSEAGDEVYMMATLLGGVPLITGSNRYKAARLASRRFNAEIIILDDGFQHWQLKRDVDIVMIDGLKPFGQGRLIPRGFLREPLSGLKRADFFVISRAHHISREKLQEIKDTLCQYNQNAVVYEATTSSVYLKELSVASLEMKSIIHKKRPLDELKGAKVIAVCGLGNPRSFYRDLEISGAEVIETLSFNDHHQYRPDDFDKIINLARQKAIDIVITTEKDAVKFSRDDIKKFIDHNINLYVLGIEISLKGTVDLAQVINKY.

72–79 (TAGGTGKT) contacts ATP.

It belongs to the LpxK family.

The enzyme catalyses a lipid A disaccharide + ATP = a lipid IVA + ADP + H(+). It participates in glycolipid biosynthesis; lipid IV(A) biosynthesis; lipid IV(A) from (3R)-3-hydroxytetradecanoyl-[acyl-carrier-protein] and UDP-N-acetyl-alpha-D-glucosamine: step 6/6. Its function is as follows. Transfers the gamma-phosphate of ATP to the 4'-position of a tetraacyldisaccharide 1-phosphate intermediate (termed DS-1-P) to form tetraacyldisaccharide 1,4'-bis-phosphate (lipid IVA). The chain is Tetraacyldisaccharide 4'-kinase from Halothermothrix orenii (strain H 168 / OCM 544 / DSM 9562).